The chain runs to 68 residues: Large ribosomal subunit protein bL32 (68 aa).

Residues methionine 1–aspartate 20 are disordered.

The protein belongs to the bacterial ribosomal protein bL32 family.

This chain is Large ribosomal subunit protein bL32, found in Ruegeria sp. (strain TM1040) (Silicibacter sp.).